A 259-amino-acid chain; its full sequence is Ribosomal RNA small subunit methyltransferase A (259 aa).

S-adenosyl-L-methionine contacts are provided by asparagine 13, leucine 15, glycine 40, glutamate 61, aspartate 85, and asparagine 103.

The protein belongs to the class I-like SAM-binding methyltransferase superfamily. rRNA adenine N(6)-methyltransferase family. RsmA subfamily.

It is found in the cytoplasm. It catalyses the reaction adenosine(1518)/adenosine(1519) in 16S rRNA + 4 S-adenosyl-L-methionine = N(6)-dimethyladenosine(1518)/N(6)-dimethyladenosine(1519) in 16S rRNA + 4 S-adenosyl-L-homocysteine + 4 H(+). Its function is as follows. Specifically dimethylates two adjacent adenosines (A1518 and A1519) in the loop of a conserved hairpin near the 3'-end of 16S rRNA in the 30S particle. May play a critical role in biogenesis of 30S subunits. This is Ribosomal RNA small subunit methyltransferase A from Neisseria meningitidis serogroup B (strain ATCC BAA-335 / MC58).